A 553-amino-acid chain; its full sequence is Formate--tetrahydrofolate ligase (553 aa).

65-72 (TPAGEGKS) contributes to the ATP binding site.

It belongs to the formate--tetrahydrofolate ligase family.

It carries out the reaction (6S)-5,6,7,8-tetrahydrofolate + formate + ATP = (6R)-10-formyltetrahydrofolate + ADP + phosphate. It participates in one-carbon metabolism; tetrahydrofolate interconversion. This is Formate--tetrahydrofolate ligase from Brachyspira hyodysenteriae (strain ATCC 49526 / WA1).